Here is a 181-residue protein sequence, read N- to C-terminus: Large ribosomal subunit protein bL17 (181 aa).

The segment covering 141–159 (KAASATAESAPVATANDAA) has biased composition (low complexity). The segment at 141-181 (KAASATAESAPVATANDAAPAEEAEVQGVKDPAEDCEAKAD) is disordered. The span at 171–181 (DPAEDCEAKAD) shows a compositional bias: basic and acidic residues.

It belongs to the bacterial ribosomal protein bL17 family. Part of the 50S ribosomal subunit. Contacts protein L32.

This is Large ribosomal subunit protein bL17 from Geotalea daltonii (strain DSM 22248 / JCM 15807 / FRC-32) (Geobacter daltonii).